Consider the following 459-residue polypeptide: Cysteine--tRNA ligase (459 aa).

Cys-27 provides a ligand contact to Zn(2+). The 'HIGH' region signature appears at 29–39 (PTVYNFVHIGN). Positions 211, 236, and 240 each coordinate Zn(2+). Positions 269 to 273 (KMSKS) match the 'KMSKS' region motif. Residue Lys-272 coordinates ATP.

It belongs to the class-I aminoacyl-tRNA synthetase family. In terms of assembly, monomer. Zn(2+) serves as cofactor.

It is found in the cytoplasm. It carries out the reaction tRNA(Cys) + L-cysteine + ATP = L-cysteinyl-tRNA(Cys) + AMP + diphosphate. The protein is Cysteine--tRNA ligase of Ehrlichia canis (strain Jake).